The following is a 377-amino-acid chain: Lactosylceramide 1,3-N-acetyl-beta-D-glucosaminyltransferase A (377 aa).

At Met-1 to Gln-12 the chain is on the cytoplasmic side. Residues Phe-13–Val-30 traverse the membrane as a helical; Signal-anchor for type II membrane protein segment. The Lumenal portion of the chain corresponds to Gln-31–Ser-377. N-linked (GlcNAc...) asparagine glycosylation is found at Asn-56, Asn-167, and Asn-275.

The protein belongs to the glycosyltransferase 31 family.

It is found in the golgi apparatus membrane. It carries out the reaction a beta-D-Gal-(1-&gt;4)-beta-D-Glc-(1&lt;-&gt;1)-Cer(d18:1(4E)) + UDP-N-acetyl-alpha-D-glucosamine = a beta-D-GlcNAc-(1-&gt;3)-beta-D-Gal-(1-&gt;4)-beta-D-Glc-(1&lt;-&gt;1)-Cer(d18:1(4E)) + UDP + H(+). It catalyses the reaction a neolactoside nLc4Cer(d18:1(4E)) + UDP-N-acetyl-alpha-D-glucosamine = a neolactoside IV(3)-beta-GlcNAc-nLc4Cer(d18:1(4E)) + UDP + H(+). Its pathway is protein modification; protein glycosylation. Beta-1,3-N-acetylglucosaminyltransferase that plays a key role in the synthesis of lacto- or neolacto-series carbohydrate chains on glycolipids. In Xenopus laevis (African clawed frog), this protein is Lactosylceramide 1,3-N-acetyl-beta-D-glucosaminyltransferase A (b3gnt5-a).